Here is a 581-residue protein sequence, read N- to C-terminus: Protein ORF B (581 aa).

The polypeptide is Protein ORF B (Elephas maximus (Indian elephant)).